The primary structure comprises 180 residues: MAVQALREELDSKCLQLLSDLEELEAKRAALNARVEEGWLSLAKARYAMGAKSVGPLQYASRMEPQVCVRASEAQDGPQTFRVIKADAQTPEEVGPSEASLRRRKGPTKTKELGSAVVPQDPLNWFGILVPHSLRQAQASFRDGLQLAADIASLQTRINWGQSQLRGLQKKLKELDPGPA.

A coiled-coil region spans residues 4–38; that stretch reads QALREELDSKCLQLLSDLEELEAKRAALNARVEEG. Residues 90 to 113 are disordered; sequence TPEEVGPSEASLRRRKGPTKTKEL.

As to quaternary structure, accessory component of the multisubunit proton-transporting vacuolar (V)-ATPase protein pump. Predominantly expressed in the heart, liver, kidney and testis and at lower levels in the brain and lung. Undetectable in the spleen and muscles.

Its subcellular location is the endosome. The protein localises to the lysosome. The protein resides in the endoplasmic reticulum-Golgi intermediate compartment. It is found in the cytoplasmic vesicle. It localises to the COPI-coated vesicle. Its subcellular location is the endoplasmic reticulum. Functionally, accessory component of the proton-transporting vacuolar (V)-ATPase protein pump involved in intracellular iron homeostasis. In aerobic conditions, required for intracellular iron homeostasis, thus triggering the activity of Fe(2+) prolyl hydroxylase (PHD) enzymes, and leading to HIF1A hydroxylation and subsequent proteasomal degradation. Necessary for endolysosomal acidification and lysosomal degradation. May be involved in Golgi homeostasis. This chain is Vacuolar ATPase assembly protein VMA22 (Vma22), found in Mus musculus (Mouse).